Here is a 99-residue protein sequence, read N- to C-terminus: Integration host factor subunit alpha (99 aa).

The protein belongs to the bacterial histone-like protein family. Heterodimer of an alpha and a beta chain.

This protein is one of the two subunits of integration host factor, a specific DNA-binding protein that functions in genetic recombination as well as in transcriptional and translational control. This Nitrosococcus oceani (strain ATCC 19707 / BCRC 17464 / JCM 30415 / NCIMB 11848 / C-107) protein is Integration host factor subunit alpha.